Consider the following 187-residue polypeptide: Protein TIFY 3B (187 aa).

Basic and acidic residues predominate over residues 1–10 (MTKVKDEPRA). The disordered stretch occupies residues 1-50 (MTKVKDEPRASVEGGCGVADGDGGAAEIGGTGSVEKSINEVRSTEIQTAE). The segment covering 14-32 (GGCGVADGDGGAAEIGGTG) has biased composition (gly residues). The Tify domain maps to 51–86 (PTVPPNQLTIFFGGSVTVFDGLPSEKVQEILRIAAK). The Jas motif lies at 139–163 (PIARRHSLQRFLEKRRDRLVNKNPY). Positions 141–148 (ARRHSLQR) match the Nuclear localization signal motif. A disordered region spans residues 152-187 (KRRDRLVNKNPYPTSDFKKTDVPTGNVSIKEEFPTA).

Belongs to the TIFY/JAZ family. Interacts with MYC2, AFPH2/NINJA, TIFY10A/JAZ1, TIFY10B/JAZ2, TIFY11A/JAZ5, TIFY11B/JAZ6, TIFY5A/JAZ8 and TIFY9/JAZ10. In terms of assembly, (Microbial infection) Interacts with the pathogenic Pseudomonas syringae HopZ1a protein. In terms of processing, (Microbial infection) Acetylated by Pseudomonas syringae HopZ1a. Post-translationally, ubiquitinated. Targeted for degradation by the SCF(COI1) E3 ubiquitin ligase-proteasome pathway during jasmonate signaling.

It localises to the nucleus. Functionally, repressor of jasmonate responses. The chain is Protein TIFY 3B from Arabidopsis thaliana (Mouse-ear cress).